Consider the following 117-residue polypeptide: Immunoglobulin heavy variable 5-10-1 (117 aa).

An N-terminal signal peptide occupies residues 1-19 (MGSTAILALLLAVLQGVCA). Residues 20–44 (EVQLVQSGAEVKKPGESLRISCKGS) are framework-1. The Ig-like domain maps to 20 to 117 (EVQLVQSGAE…SDTAMYYCAR (98 aa)). C41 and C115 are joined by a disulfide. Positions 45 to 52 (GYSFTSYW) are complementarity-determining-1. A framework-2 region spans residues 53–69 (ISWVRQMPGKGLEWMGR). The segment at 70–77 (IDPSDSYT) is complementarity-determining-2. The framework-3 stretch occupies residues 78–115 (NYSPSFQGHVTISADKSISTAYLQWSSLKASDTAMYYC). The complementarity-determining-3 stretch occupies residues 116-117 (AR).

As to quaternary structure, immunoglobulins are composed of two identical heavy chains and two identical light chains; disulfide-linked.

It is found in the secreted. The protein resides in the cell membrane. V region of the variable domain of immunoglobulin heavy chains that participates in the antigen recognition. Immunoglobulins, also known as antibodies, are membrane-bound or secreted glycoproteins produced by B lymphocytes. In the recognition phase of humoral immunity, the membrane-bound immunoglobulins serve as receptors which, upon binding of a specific antigen, trigger the clonal expansion and differentiation of B lymphocytes into immunoglobulins-secreting plasma cells. Secreted immunoglobulins mediate the effector phase of humoral immunity, which results in the elimination of bound antigens. The antigen binding site is formed by the variable domain of one heavy chain, together with that of its associated light chain. Thus, each immunoglobulin has two antigen binding sites with remarkable affinity for a particular antigen. The variable domains are assembled by a process called V-(D)-J rearrangement and can then be subjected to somatic hypermutations which, after exposure to antigen and selection, allow affinity maturation for a particular antigen. This Homo sapiens (Human) protein is Immunoglobulin heavy variable 5-10-1.